A 1453-amino-acid polypeptide reads, in one-letter code: Collagen alpha-1(I) chain (1453 aa).

An N-terminal signal peptide occupies residues 1–22 (MFSFVDLRLLLLLGATALLTHG). Residues 23 to 151 (QEDIPEVSCI…PPGLGGNFAS (129 aa)) constitute a propeptide, N-terminal propeptide. The VWFC domain occupies 29-87 (VSCIHNGLRVPNGETWKPDVCLICICHNGTAVCDGVLCKEDLDCPNPQKREGECCPFCP). The N-linked (GlcNAc...) asparagine glycan is linked to Asn56. The disordered stretch occupies residues 97–1206 (VIGVEGPKGD…KSQDGGRYYR (1110 aa)). Pro residues-rich tracts occupy residues 109-118 (PQGPRGPVGP) and 128-143 (PGLP…PGPP). A Pyrrolidone carboxylic acid modification is found at Gln152. Residues 152 to 167 (QMSYGYDEKSAGVSVP) form a nonhelical region (N-terminal) region. Allysine is present on Lys160. Position 161 is a phosphoserine (Ser161). Positions 168 to 1181 (GPMGPSGPRG…PGPPGPPGPP (1014 aa)) are triple-helical region. Pro179, Pro182, Pro185, Pro194, Pro197, Pro200, Pro215, Pro230, Pro236, Pro245, and Pro251 each carry 4-hydroxyproline. Over residues 187-206 (PQGFQGPPGEPGEPGASGPM) the composition is skewed to low complexity. Basic and acidic residues predominate over residues 218–232 (NGDDGEAGKPGRPGE). Lys254 is modified (5-hydroxylysine; alternate). The O-linked (Gal...) hydroxylysine; alternate glycan is linked to Lys254. At Ser260 the chain carries Phosphoserine. 5 positions are modified to 4-hydroxyproline: Pro278, Pro281, Pro287, Pro296, and Pro302. Low complexity predominate over residues 307 to 320 (SAGARGNDGAVGAA). Residues 322 to 334 (PPGPTGPTGPPGF) are compositionally biased toward pro residues. A 4-hydroxyproline mark is found at Pro323, Pro332, Pro335, Pro362, Pro365, Pro377, Pro383, Pro392, Pro398, Pro401, and Pro416. A compositionally biased stretch (low complexity) spans 335–361 (PGAAGAKGEAGPQGARGSEGPQGVRGE). Residues 368 to 418 (AGAAGPAGNPGADGQPGAKGANGAPGIAGAPGFPGARGPSGPQGPSGAPGP) are compositionally biased toward low complexity. Lys419 bears the 5-hydroxylysine mark. Pro425, Pro428, Pro440, Pro449, Pro464, Pro470, Pro479, and Pro485 each carry 4-hydroxyproline. Over residues 474 to 483 (GERGGPGSRG) the composition is skewed to gly residues. A 5-hydroxylysine modification is found at Lys494. 4-hydroxyproline occurs at positions 503, 512, 518, 524, 533, 536, 545, 554, 560, 572, 581, 590, 593, 611, 629, 635, 641, 647, 653, 659, 671, 680, 692, 704, 707, 713, 719, and 728. A compositionally biased stretch (low complexity) spans 527–566 (KGLTGSPGSPGPDGKTGPPGPAGQDGRPGPAGPPGARGQA). Positions 623 to 650 (QGPAGSPGFQGLPGPAGPPGEAGKPGEQ) are enriched in low complexity. Low complexity-rich tracts occupy residues 685–695 (PRGNNGAPGND) and 703–716 (APGA…PGLQ). The short motif at 734–736 (RGD) is the Cell attachment site element. Lys740 is modified (5-hydroxylysine). 3 positions are modified to 4-hydroxyproline: Pro746, Pro761, and Pro767. Positions 773 to 787 (TGPSGPAGPTGARGA) are enriched in low complexity. Phosphoserine is present on Ser776. A 4-hydroxyproline mark is found at Pro788, Pro794, Pro797, Pro806, Pro812, Pro830, Pro839, and Pro848. A compositionally biased stretch (low complexity) spans 800-815 (AGFAGPPGADGQPGAK). Pro residues predominate over residues 829-841 (PPGPAGPAGPPGP). The span at 842–872 (IGNVGAPGPKGSRGAAGPPGATGFPGAAGRV) shows a compositional bias: low complexity. Lys851 is subject to 5-hydroxylysine. 4-hydroxyproline is present on residues Pro860 and Pro866. Position 874 is a 3-hydroxyproline (Pro874). A 4-hydroxyproline mark is found at Pro875, Pro884, Pro887, Pro908, Pro917, Pro926, Pro935, Pro953, Pro962, Pro965, Pro971, Pro986, Pro992, Pro998, Pro1007, and Pro1013. The span at 901–910 (ETGPAGRPGE) shows a compositional bias: low complexity. A compositionally biased stretch (low complexity) spans 920-935 (AGEKGSPGADGPAGSP). A compositionally biased stretch (pro residues) spans 985–995 (PPGPMGPPGLA). Positions 997–1012 (PPGESGREGSPGAEGS) are enriched in low complexity. Lys1022 is subject to 5-hydroxylysine. The span at 1031–1046 (AGPPGAPGAPGAPGPV) shows a compositional bias: pro residues. 4-hydroxyproline is present on residues Pro1034, Pro1037, and Pro1040. A compositionally biased stretch (low complexity) spans 1067–1081 (IGPAGARGPAGPQGP). The short motif at 1082-1084 (RGD) is the Cell attachment site element. The segment covering 1082 to 1096 (RGDKGETGEQGDRGI) has biased composition (basic and acidic residues). 5-hydroxylysine is present on Lys1085. A 5-hydroxylysine; alternate modification is found at Lys1097. Lys1097 carries O-linked (Gal...) hydroxylysine; alternate glycosylation. Residues 1102-1148 (FSGLQGPPGSPGSPGEQGPSGASGPAGPRGPPGSAGSPGKDGLNGLP) show a composition bias toward low complexity. 5 positions are modified to 4-hydroxyproline: Pro1109, Pro1112, Pro1115, Pro1133, and Pro1148. Position 1153 is a 3-hydroxyproline (Pro1153). 4-hydroxyproline is present on Pro1154. A compositionally biased stretch (pro residues) spans 1166 to 1181 (AGPPGPPGPPGPPGPP). Position 1168 is a 3-hydroxyproline (Pro1168). Position 1169 is a 4-hydroxyproline (Pro1169). At Pro1171 the chain carries 3-hydroxyproline. Pro1172 is subject to 4-hydroxyproline. A 3-hydroxyproline modification is found at Pro1174. 4-hydroxyproline occurs at positions 1175, 1178, and 1181. The major antigenic determinant (of neutral salt-extracted rat skin collagen) stretch occupies residues 1176-1186 (GPPGPPSGGYD). Residues 1182–1207 (SGGYDFSFLPQPPQEKSQDGGRYYRA) are nonhelical region (C-terminal). Lys1197 is subject to Allysine. A compositionally biased stretch (basic and acidic residues) spans 1197-1206 (KSQDGGRYYR). A propeptide spans 1208 to 1453 (DDANVVRDRD…GMDIGPACFV (246 aa)) (C-terminal propeptide). The Fibrillar collagen NC1 domain maps to 1218–1453 (LEVDTTLKSL…GMDIGPACFV (236 aa)). Cystine bridges form between Cys1248–Cys1280, Cys1288–Cys1451, and Cys1359–Cys1404. Ca(2+)-binding residues include Asp1266, Asn1268, Gln1269, Cys1271, and Asp1274. A glycan (N-linked (GlcNAc...) asparagine) is linked at Asn1354.

The protein belongs to the fibrillar collagen family. Trimers of one alpha 2(I) and two alpha 1(I) chains. Interacts with MRC2. Interacts with TRAM2. Interacts with MFAP4 in a Ca (2+)-dependent manner. In terms of processing, contains mostly 4-hydroxyproline. Proline residues at the third position of the tripeptide repeating unit (G-X-Y) are hydroxylated in some or all of the chains. Post-translationally, contains 3-hydroxyproline at a few sites. This modification occurs on the first proline residue in the sequence motif Gly-Pro-Hyp, where Hyp is 4-hydroxyproline. Lysine residues at the third position of the tripeptide repeating unit (G-X-Y) are 5-hydroxylated in some or all of the chains. In terms of processing, O-glycosylated on hydroxylated lysine residues. The O-linked glycan consists of a Glc-Gal disaccharide. As to expression, forms the fibrils of tendon, ligaments and bones. In bones the fibrils are mineralized with calcium hydroxyapatite.

The protein resides in the secreted. It localises to the extracellular space. Its subcellular location is the extracellular matrix. Its function is as follows. Type I collagen is a member of group I collagen (fibrillar forming collagen). The protein is Collagen alpha-1(I) chain (Col1a1) of Rattus norvegicus (Rat).